The primary structure comprises 377 residues: UDP-N-acetylglucosamine 2-epimerase (377 aa).

The active site involves His-212.

This sequence belongs to the UDP-N-acetylglucosamine 2-epimerase family. In terms of assembly, homodimer.

The enzyme catalyses UDP-N-acetyl-alpha-D-glucosamine + H2O = aldehydo-N-acetyl-D-mannosamine + UDP + H(+). Catalyzes the conversion of UDP-N-acetylglucosamine (UDP-GlcNAc) to UDP and N-acetyl-D-mannosamine (ManNAc). The chain is UDP-N-acetylglucosamine 2-epimerase (siaA) from Neisseria meningitidis serogroup B (strain ATCC BAA-335 / MC58).